Here is a 68-residue protein sequence, read N- to C-terminus: Large ribosomal subunit protein uL30 (68 aa).

The segment at 1-26 (MSAKKSASKATVTVQQIGSPLRREPS) is disordered. A compositionally biased stretch (polar residues) spans 8-18 (SKATVTVQQIG).

This sequence belongs to the universal ribosomal protein uL30 family. Part of the 50S ribosomal subunit.

The sequence is that of Large ribosomal subunit protein uL30 from Parvibaculum lavamentivorans (strain DS-1 / DSM 13023 / NCIMB 13966).